We begin with the raw amino-acid sequence, 280 residues long: Manganese import system permease protein ScaB (280 aa).

Helical transmembrane passes span 18–38 (ALITAIAIGIVAGAVGCFIIL), 61–81 (ILGINFFIGAIVFGLLASILI), 94–114 (TAIGITFSSFLALGVILIGVA), 139–159 (TIGVGVTVLLVICLLFRPLLL), 174–194 (VKIYHYLLMVLLTLVSVTAMQ), 196–216 (VGTILIVAMLITPAATAYLYA), 222–242 (MMLLSSSLGALASILGLFIGY), and 246–266 (IAVGSCIVLTSAVFFLISFFI).

The protein belongs to the ABC-3 integral membrane protein family.

The protein localises to the cell membrane. Functionally, part of an ABC transporter complex involved in manganese import. This is Manganese import system permease protein ScaB from Streptococcus parasanguinis.